The following is a 481-amino-acid chain: 6-phosphogluconate dehydrogenase, decarboxylating (481 aa).

NADP(+)-binding positions include 11–16, 34–36, 76–78, and Asn104; these read GLAVMG, NRT, and VKA. Substrate contacts are provided by residues Asn104 and 130 to 132; that span reads SGG. The active-site Proton acceptor is the Lys184. 187–188 contributes to the substrate binding site; the sequence is HN. Residue Glu191 is the Proton donor of the active site. Substrate is bound by residues Tyr192, Lys259, Arg286, Arg445, and His451.

The protein belongs to the 6-phosphogluconate dehydrogenase family. As to quaternary structure, homodimer.

The catalysed reaction is 6-phospho-D-gluconate + NADP(+) = D-ribulose 5-phosphate + CO2 + NADPH. Its pathway is carbohydrate degradation; pentose phosphate pathway; D-ribulose 5-phosphate from D-glucose 6-phosphate (oxidative stage): step 3/3. Functionally, catalyzes the oxidative decarboxylation of 6-phosphogluconate to ribulose 5-phosphate and CO(2), with concomitant reduction of NADP to NADPH. The chain is 6-phosphogluconate dehydrogenase, decarboxylating (Pgd) from Drosophila melanogaster (Fruit fly).